A 502-amino-acid chain; its full sequence is Lysine--tRNA ligase (502 aa).

Glu-413 and Glu-420 together coordinate Mg(2+).

Belongs to the class-II aminoacyl-tRNA synthetase family. Homodimer. The cofactor is Mg(2+).

The protein resides in the cytoplasm. The catalysed reaction is tRNA(Lys) + L-lysine + ATP = L-lysyl-tRNA(Lys) + AMP + diphosphate. This Haemophilus influenzae (strain ATCC 51907 / DSM 11121 / KW20 / Rd) protein is Lysine--tRNA ligase (lysS).